Here is a 435-residue protein sequence, read N- to C-terminus: D-aminoacyl-tRNA deacylase (435 aa).

The protein belongs to the DtdA deacylase family. Monomer. Zn(2+) serves as cofactor.

It carries out the reaction a D-aminoacyl-tRNA + H2O = a tRNA + a D-alpha-amino acid + H(+). The enzyme catalyses glycyl-tRNA(Ala) + H2O = tRNA(Ala) + glycine + H(+). D-aminoacyl-tRNA deacylase with broad substrate specificity. By recycling D-aminoacyl-tRNA to D-amino acids and free tRNA molecules, this enzyme counteracts the toxicity associated with the formation of D-aminoacyl-tRNA entities in vivo. This chain is D-aminoacyl-tRNA deacylase, found in Methanosphaerula palustris (strain ATCC BAA-1556 / DSM 19958 / E1-9c).